Here is a 478-residue protein sequence, read N- to C-terminus: NADH oxidase (478 aa).

FAD-binding positions include 8–12 (GINHA), aspartate 33, cysteine 43, valine 80, 111–114 (ASGA), lysine 149, and tyrosine 177. Histidine 11 (proton acceptor) is an active-site residue. The Redox-active role is filled by cysteine 43. At cysteine 43 the chain carries Cysteine sulfinic acid (-SO2H). NAD(+) contacts are provided by residues 170 to 185 (VAIV…LAEA), aspartate 197, and glycine 264. FAD-binding positions include 295–305 (LNHKDVYVIGG), leucine 322, alanine 323, and threonine 324. Residue alanine 353 participates in NAD(+) binding. Phenylalanine 450 serves as a coordination point for FAD.

The protein belongs to the class-III pyridine nucleotide-disulfide oxidoreductase family. FAD is required as a cofactor.

It carries out the reaction 2 NADH + O2 + 2 H(+) = 2 NAD(+) + 2 H2O. Its function is as follows. Catalyzes the four-electron reduction of molecular oxygen to water. The polypeptide is NADH oxidase (nox) (Mycoplasma genitalium (strain ATCC 33530 / DSM 19775 / NCTC 10195 / G37) (Mycoplasmoides genitalium)).